The primary structure comprises 295 residues: Cell shape-determining protein MreC (295 aa).

The signal sequence occupies residues 1–34 (MPQFFLNKRLIILLISIIVLVALVGFSLRDRENA). The stretch at 66-112 (VVDLKNTYTENQHLKERLEELAQLESEVADLKKENKDLKESLDITDS) forms a coiled coil. The segment at 276–295 (SAEAGTTDDDTTSSDTTGGQ) is disordered.

It belongs to the MreC family. Homooligomer of 24 subunits, arranged as 12 dimers.

Involved in formation and maintenance of cell shape. The protein is Cell shape-determining protein MreC of Listeria monocytogenes serovar 1/2a (strain ATCC BAA-679 / EGD-e).